The primary structure comprises 475 residues: Ribulose bisphosphate carboxylase large chain (475 aa).

A propeptide spanning residues 1-2 (MS) is cleaved from the precursor. At proline 3 the chain carries N-acetylproline. Lysine 14 is modified (N6,N6,N6-trimethyllysine). Positions 123 and 173 each coordinate substrate. Residue lysine 175 is the Proton acceptor of the active site. Lysine 177 contacts substrate. The Mg(2+) site is built by lysine 201, aspartate 203, and glutamate 204. N6-carboxylysine is present on lysine 201. The active-site Proton acceptor is histidine 294. Substrate-binding residues include arginine 295, histidine 327, and serine 379.

It belongs to the RuBisCO large chain family. Type I subfamily. As to quaternary structure, heterohexadecamer of 8 large chains and 8 small chains; disulfide-linked. The disulfide link is formed within the large subunit homodimers. Mg(2+) serves as cofactor. The disulfide bond which can form in the large chain dimeric partners within the hexadecamer appears to be associated with oxidative stress and protein turnover.

It is found in the plastid. The protein localises to the chloroplast. It catalyses the reaction 2 (2R)-3-phosphoglycerate + 2 H(+) = D-ribulose 1,5-bisphosphate + CO2 + H2O. The catalysed reaction is D-ribulose 1,5-bisphosphate + O2 = 2-phosphoglycolate + (2R)-3-phosphoglycerate + 2 H(+). In terms of biological role, ruBisCO catalyzes two reactions: the carboxylation of D-ribulose 1,5-bisphosphate, the primary event in carbon dioxide fixation, as well as the oxidative fragmentation of the pentose substrate in the photorespiration process. Both reactions occur simultaneously and in competition at the same active site. The chain is Ribulose bisphosphate carboxylase large chain from Pinus koraiensis (Korean pine).